A 370-amino-acid polypeptide reads, in one-letter code: Protein Brevis radix-like 3 (370 aa).

Positions K140–N221 constitute a BRX 1 domain. Composition is skewed to polar residues over residues L231–K248 and P266–D291. A disordered region spans residues L231 to E316. One can recognise a BRX 2 domain in the interval S315–L370.

Belongs to the BRX family. In terms of tissue distribution, expressed in roots.

The protein localises to the nucleus. This Arabidopsis thaliana (Mouse-ear cress) protein is Protein Brevis radix-like 3 (BRXL3).